A 74-amino-acid chain; its full sequence is Heat shock factor-binding protein 1-like protein 1 (74 aa).

The stretch at 12 to 65 (RALRDAAENLFQELQEHFQALTATLNLRMEEMGNRIEDLQKNVKDLMVQAGIEN) forms a coiled coil.

The protein belongs to the HSBP1 family.

The polypeptide is Heat shock factor-binding protein 1-like protein 1 (HSBP1L1) (Homo sapiens (Human)).